Here is a 284-residue protein sequence, read N- to C-terminus: ATP synthase subunit a (284 aa).

6 consecutive transmembrane segments (helical) span residues 55-75 (AIHV…LGLF), 116-136 (IAPL…LKLI), 165-185 (FGMS…VKGV), 196-216 (PFNH…ALII), 234-254 (VVFI…NVPW), and 255-275 (AIFH…LTVV).

It belongs to the ATPase A chain family. In terms of assembly, F-type ATPases have 2 components, CF(1) - the catalytic core - and CF(0) - the membrane proton channel. CF(1) has five subunits: alpha(3), beta(3), gamma(1), delta(1), epsilon(1). CF(0) has three main subunits: a(1), b(2) and c(9-12). The alpha and beta chains form an alternating ring which encloses part of the gamma chain. CF(1) is attached to CF(0) by a central stalk formed by the gamma and epsilon chains, while a peripheral stalk is formed by the delta and b chains.

The protein resides in the cell inner membrane. Key component of the proton channel; it plays a direct role in the translocation of protons across the membrane. The polypeptide is ATP synthase subunit a (Marinobacter nauticus (strain ATCC 700491 / DSM 11845 / VT8) (Marinobacter aquaeolei)).